The following is a 529-amino-acid chain: Peptide chain release factor 3 (529 aa).

Residues 11–280 (AKRRTFAIIS…GLVEWAPAPM (270 aa)) enclose the tr-type G domain. GTP-binding positions include 20 to 27 (SHPDAGKT), 88 to 92 (DTPGH), and 142 to 145 (NKLD).

It belongs to the TRAFAC class translation factor GTPase superfamily. Classic translation factor GTPase family. PrfC subfamily.

The protein localises to the cytoplasm. Functionally, increases the formation of ribosomal termination complexes and stimulates activities of RF-1 and RF-2. It binds guanine nucleotides and has strong preference for UGA stop codons. It may interact directly with the ribosome. The stimulation of RF-1 and RF-2 is significantly reduced by GTP and GDP, but not by GMP. The chain is Peptide chain release factor 3 from Shigella sonnei (strain Ss046).